The primary structure comprises 293 residues: Protease HtpX (293 aa).

Transmembrane regions (helical) follow at residues 4 to 24 (ISLF…VLSL) and 33 to 53 (AGLM…SLLM). His139 serves as a coordination point for Zn(2+). Residue Glu140 is part of the active site. Zn(2+) is bound at residue His143. The next 2 membrane-spanning stretches (helical) occupy residues 158-178 (VVNT…AGFM) and 193-213 (LVYF…ASII). Zn(2+) is bound at residue Glu222.

This sequence belongs to the peptidase M48B family. The cofactor is Zn(2+).

It localises to the cell inner membrane. This is Protease HtpX from Sodalis glossinidius (strain morsitans).